The sequence spans 382 residues: Galactokinase (382 aa).

34–37 (EHTD) provides a ligand contact to substrate. ATP is bound at residue 124–130 (GAGLSSS). Residues Ser130 and Glu162 each contribute to the Mg(2+) site. The active-site Proton acceptor is Asp174. Tyr223 provides a ligand contact to substrate.

The protein belongs to the GHMP kinase family. GalK subfamily.

It localises to the cytoplasm. It catalyses the reaction alpha-D-galactose + ATP = alpha-D-galactose 1-phosphate + ADP + H(+). The protein operates within carbohydrate metabolism; galactose metabolism. Catalyzes the transfer of the gamma-phosphate of ATP to D-galactose to form alpha-D-galactose-1-phosphate (Gal-1-P). The protein is Galactokinase of Erwinia tasmaniensis (strain DSM 17950 / CFBP 7177 / CIP 109463 / NCPPB 4357 / Et1/99).